A 459-amino-acid chain; its full sequence is Protein FAM90A27P (459 aa).

The segment covering Met-1–Ala-10 has biased composition (basic residues). 4 disordered regions span residues Met-1 to Val-41, Ser-74 to Pro-136, His-153 to Pro-239, and Pro-259 to Asp-459. Residues Pro-125–Pro-136 show a composition bias toward basic and acidic residues. Over residues His-184–Gly-194 the composition is skewed to polar residues. Positions Lys-341 to Thr-353 are enriched in low complexity. Over residues Pro-415–Phe-427 the composition is skewed to polar residues.

Belongs to the FAM90 family.

This Homo sapiens (Human) protein is Protein FAM90A27P (FAM90A27P).